The sequence spans 140 residues: Ribosome maturation factor RimP (140 aa).

Belongs to the RimP family.

The protein localises to the cytoplasm. Required for maturation of 30S ribosomal subunits. This chain is Ribosome maturation factor RimP, found in Campylobacter hominis (strain ATCC BAA-381 / DSM 21671 / CCUG 45161 / LMG 19568 / NCTC 13146 / CH001A).